Reading from the N-terminus, the 181-residue chain is Ankyrin repeat-containing protein YGL242C (181 aa).

Methionine 1 is modified (N-acetylmethionine). 2 ANK repeats span residues 49–78 (LGNT…EIEI) and 85–120 (DGDT…DPRV). The tract at residues 151–181 (IDSTNGSGDNNEDGEMIDDGPSDDDEEDDKK) is disordered. The span at 160-181 (NNEDGEMIDDGPSDDDEEDDKK) shows a compositional bias: acidic residues. Serine 172 is subject to Phosphoserine.

The chain is Ankyrin repeat-containing protein YGL242C from Saccharomyces cerevisiae (strain ATCC 204508 / S288c) (Baker's yeast).